Reading from the N-terminus, the 255-residue chain is Zinc import ATP-binding protein ZnuC (255 aa).

Positions Val-4–Gly-219 constitute an ABC transporter domain. Position 36–43 (Gly-36–Thr-43) interacts with ATP. The disordered stretch occupies residues Glu-234–Glu-255.

It belongs to the ABC transporter superfamily. Zinc importer (TC 3.A.1.15.5) family. As to quaternary structure, the complex is composed of two ATP-binding proteins (ZnuC), two transmembrane proteins (ZnuB) and a solute-binding protein (ZnuA).

The protein localises to the cell inner membrane. The catalysed reaction is Zn(2+)(out) + ATP(in) + H2O(in) = Zn(2+)(in) + ADP(in) + phosphate(in) + H(+)(in). Its function is as follows. Part of the ABC transporter complex ZnuABC involved in zinc import. Responsible for energy coupling to the transport system. The chain is Zinc import ATP-binding protein ZnuC from Roseobacter denitrificans (strain ATCC 33942 / OCh 114) (Erythrobacter sp. (strain OCh 114)).